Consider the following 288-residue polypeptide: 3'-5' exonuclease (288 aa).

The disordered stretch occupies residues 30 to 67 (RSSSSSSSAAPTVQATTSVHGHEEDPNQIPNNIRRQLP). 2 stretches are compositionally biased toward polar residues: residues 38-48 (AAPTVQATTSV) and 57-67 (QIPNNIRRQLP). Residues 129–279 (FVGLDIEWRP…ASWHLYKVLK (151 aa)) form the 3'-5' exonuclease domain.

In terms of assembly, interacts with KU70 and KU80. Interacts with RECQL2. Mg(2+) serves as cofactor. Requires Mn(2+) as cofactor. In terms of tissue distribution, expressed ubiquitously.

It is found in the nucleus. Activated upon interaction with the KU heterodimer. Not stimulated by ATP. Functionally, exonuclease that digests recessed strands of DNA duplexes in the 3' to 5' direction but hardly single-stranded DNA or blunt-ended duplexes. Also able to digest 3'-protruding strands and 3'-recessed strand termini of duplexes containing mismatched bases. In Arabidopsis thaliana (Mouse-ear cress), this protein is 3'-5' exonuclease (WEX).